The primary structure comprises 129 residues: Small ribosomal subunit protein uS11 (129 aa).

This sequence belongs to the universal ribosomal protein uS11 family. As to quaternary structure, part of the 30S ribosomal subunit. Interacts with proteins S7 and S18. Binds to IF-3.

In terms of biological role, located on the platform of the 30S subunit, it bridges several disparate RNA helices of the 16S rRNA. Forms part of the Shine-Dalgarno cleft in the 70S ribosome. In Yersinia pseudotuberculosis serotype O:1b (strain IP 31758), this protein is Small ribosomal subunit protein uS11.